Here is a 137-residue protein sequence, read N- to C-terminus: Large ribosomal subunit protein uL16 (137 aa).

Belongs to the universal ribosomal protein uL16 family. In terms of assembly, part of the 50S ribosomal subunit.

Binds 23S rRNA and is also seen to make contacts with the A and possibly P site tRNAs. The chain is Large ribosomal subunit protein uL16 from Streptococcus sanguinis (strain SK36).